A 62-amino-acid polypeptide reads, in one-letter code: MTIAFQLAIFALIATSSILLISVPVVFASPDGWSSNKNVVFSGTSLWIGLVFLVGILNSLIS.

Helical transmembrane passes span 8 to 28 (AIFA…VVFA) and 41 to 61 (FSGT…NSLI).

Belongs to the PsbZ family. In terms of assembly, PSII is composed of 1 copy each of membrane proteins PsbA, PsbB, PsbC, PsbD, PsbE, PsbF, PsbH, PsbI, PsbJ, PsbK, PsbL, PsbM, PsbT, PsbY, PsbZ, Psb30/Ycf12, at least 3 peripheral proteins of the oxygen-evolving complex and a large number of cofactors. It forms dimeric complexes.

The protein localises to the plastid. It localises to the chloroplast thylakoid membrane. May control the interaction of photosystem II (PSII) cores with the light-harvesting antenna, regulates electron flow through the 2 photosystem reaction centers. PSII is a light-driven water plastoquinone oxidoreductase, using light energy to abstract electrons from H(2)O, generating a proton gradient subsequently used for ATP formation. The protein is Photosystem II reaction center protein Z of Acorus gramineus (Dwarf sweet flag).